The primary structure comprises 205 residues: Translation initiation factor 2 subunit beta (205 aa).

Positions 145 to 203 (GIEIGKEYTVTIESTGSAGEGIARYQGYTIYVPKAKKGERVKIIIRKIKRNVAIAELAD) constitute a TRAM domain.

It belongs to the eIF-2-beta/eIF-5 family. In terms of assembly, heterotrimer composed of an alpha, a beta and a gamma chain.

EIF-2 functions in the early steps of protein synthesis by forming a ternary complex with GTP and initiator tRNA. The polypeptide is Translation initiation factor 2 subunit beta (Picrophilus torridus (strain ATCC 700027 / DSM 9790 / JCM 10055 / NBRC 100828 / KAW 2/3)).